Consider the following 373-residue polypeptide: Velvet complex subunit RYP3 (373 aa).

Residues Met-1–His-10 show a composition bias toward basic and acidic residues. Disordered regions lie at residues Met-1–Gly-26 and Arg-344–Gly-373. Residues Val-48–Arg-344 form the Velvet domain. The segment covering Gly-364–Gly-373 has biased composition (acidic residues).

It belongs to the velvet family. VelB subfamily. As to quaternary structure, component of the heterotrimeric velvet complex composed of LAE1, VEL1 and VEL2; VEL1A acting as a bridging protein between LAE1 and VEL2. Forms a heterodimeric complex with VOS1; the formation of the VEL2-VOS1 complex is light-dependent.

It localises to the nucleus. It is found in the cytoplasm. In terms of biological role, component of the velvet transcription factor complex that controls sexual/asexual developmental ratio in response to light, promoting sexual development in the darkness while stimulating asexual sporulation under illumination. The velvet complex acts as a global regulator for secondary metabolite gene expression. Component of the RYP2-RYP3 heterodimeric complex that plays a dual role in activating genes associated with spore maturation and repressing certain development-associated genes. The complex binds DNA through the DNA-binding domain of RYP2 that recognizes an 11-nucleotide consensus sequence 5'-CTGGCCGCGGC-3' consisting of two motifs in the promoters of key developmental regulatory genes. Required for viable spore production and regulation of sporulation in response to temperature, as well as for the switch to yeast-form in the presence of host cells. In Ajellomyces capsulatus (Darling's disease fungus), this protein is Velvet complex subunit RYP3 (RYP3).